Here is a 312-residue protein sequence, read N- to C-terminus: Protein ABIL2 (312 aa).

The interval 173-287 (TIRETPPPPV…TEQQQPSKSK (115 aa)) is disordered. Over residues 183 to 199 (RKSTSQSSSPRQPPQRS) the composition is skewed to low complexity. The segment covering 230 to 251 (SVATRKSASISRPTTPSKSRSI) has biased composition (polar residues). Over residues 269–279 (AFEKDNQKETE) the composition is skewed to basic and acidic residues.

It belongs to the ABI family. As to quaternary structure, binds SCAR.

Its subcellular location is the cytoplasm. The protein resides in the cytoskeleton. Involved in regulation of actin and microtubule organization. Part of a WAVE complex that activates the Arp2/3 complex. The chain is Protein ABIL2 (ABIL2) from Arabidopsis thaliana (Mouse-ear cress).